We begin with the raw amino-acid sequence, 1202 residues long: MVQKNTFEAMKIGLASPDKIRQWSWGEVKKPETINYRTLKPEKEGLFCEKIFGPTKDYECNCGKYKRIRYKGIVCEKCGVEVTKSKVRRERMGHIELATPVSHIWYFKGIPSRMGLLLDMSPRALEKVLYFASFVVIDPGKTDLYEKQLLTEQEYEEYCDKYEEDVDFRAKMGAEAIKELLQKIDLQEEYKNLTETFEGSTGQKKVRILRRLEVVEAFIESKNDPSWMIMDVIPVIPPDIRPMVQLEGGRFATSDLNDLYRRVINRNNRLKRLLDIGSPEIIVRNEKRMLQEAVDALIDNGRRGKPVTGPGNRPLKSLSDMLKGKSGRFRQNLLGKRVDYSGRSVIVIGPNLKFYQCGLPKKMALELFKPFVIRELVKREISHNVKNAKKLVERENDKVWDVLEDIIVDHPVLLNRAPTLHRLGIQAFEPILVEGKAIKLHPLVCTAYNADFDGDQMAVHLPLSPEAQAEARLLMLSTNNILAPKDGKPITTPSQDMVLGSFYMTTRKEGQKGEGLIFKDIDEMMLAYAMHYVTLQTIVKVRRNSVNNDGTSKIVESTVGRFIFNEGIPQDLGMVNRNEDPYSLEVDLQVDKKMLSKIIDLTFRRYGNIRTAELLDYIKSMGYKYSTIGALTISMGDITIPDSKKGIIEQAEQRIDMVQDIYLQGDITNEERYKKVIEIWEQCIKDVTRALMTNLPADNNLNIMAVSGARGSENQIRQLGGMRGLMSDTAGNTIEIPITSNFREGLSVQEFFISTHGSRKGLSDTALRTADSGYLTRRLVDVSQDVIITEDDCGTDEYIVAKEIKDGNRQVEDLKSRIIGRYAFEDILDLDTGEIIVHKNDMINEAIAERIESKGIKEVKVRSVLGCKMKHGVCAKCYGRNLATGKPVNIGEAVGIIAAQSIGEPGTQLTMRTFHSGGIAGVGITSGLPRVEELFEARKPKGLAYITEIEGTVKIQENKKRNDVIVTSEDGEEQVYQIPYGAHIRVNEGDHVEKGEPLTEGSINPQDILRVNGAEGVRDYIIREVQKVYRLQGVDIDDKHIEIIIRQMMSKIKVEESGDSGFLSGSVVDARDFKMTNEQLIKEGKTPATGTHSLMGITKASLATESFLSAASFQETTRVLTETSIKGKVDHLIGLKENVIIGKLIPAGTGIAKYDRIEVDYDGKAEDDMIEAEKAQASNDSEEAEESTIISGNYESLQDEDK.

Positions 60, 62, 75, and 78 each coordinate Zn(2+). The tract at residues 301 to 320 (GRRGKPVTGPGNRPLKSLSD) is disordered. 3 residues coordinate Mg(2+): Asp-451, Asp-453, and Asp-455. Residues Cys-793, Cys-867, Cys-874, and Cys-877 each contribute to the Zn(2+) site. Residues 1168 to 1202 (DMIEAEKAQASNDSEEAEESTIISGNYESLQDEDK) form a disordered region.

It belongs to the RNA polymerase beta' chain family. The RNAP catalytic core consists of 2 alpha, 1 beta, 1 beta' and 1 omega subunit. When a sigma factor is associated with the core the holoenzyme is formed, which can initiate transcription. It depends on Mg(2+) as a cofactor. Zn(2+) is required as a cofactor.

The enzyme catalyses RNA(n) + a ribonucleoside 5'-triphosphate = RNA(n+1) + diphosphate. DNA-dependent RNA polymerase catalyzes the transcription of DNA into RNA using the four ribonucleoside triphosphates as substrates. The sequence is that of DNA-directed RNA polymerase subunit beta' from Finegoldia magna (strain ATCC 29328 / DSM 20472 / WAL 2508) (Peptostreptococcus magnus).